Consider the following 187-residue polypeptide: Large ribosomal subunit protein uL13 (187 aa).

This sequence belongs to the universal ribosomal protein uL13 family. As to quaternary structure, part of the 50S ribosomal subunit.

Functionally, this protein is one of the early assembly proteins of the 50S ribosomal subunit, although it is not seen to bind rRNA by itself. It is important during the early stages of 50S assembly. The polypeptide is Large ribosomal subunit protein uL13 (Pyrobaculum aerophilum (strain ATCC 51768 / DSM 7523 / JCM 9630 / CIP 104966 / NBRC 100827 / IM2)).